The following is a 1027-amino-acid chain: Error-prone DNA polymerase (1027 aa).

Belongs to the DNA polymerase type-C family. DnaE2 subfamily.

The protein resides in the cytoplasm. The catalysed reaction is DNA(n) + a 2'-deoxyribonucleoside 5'-triphosphate = DNA(n+1) + diphosphate. Functionally, DNA polymerase involved in damage-induced mutagenesis and translesion synthesis (TLS). It is not the major replicative DNA polymerase. The polypeptide is Error-prone DNA polymerase (Dechloromonas aromatica (strain RCB)).